The chain runs to 456 residues: Signal transduction histidine-protein kinase ArlS (456 aa).

2 consecutive transmembrane segments (helical) span residues 13–33 (LITTLITFTTILLFCLIIIFF) and 157–177 (IVALAFGLIATIITAGVSYIF). In terms of domain architecture, HAMP spans 179–232 (SQITKPIVTMSNKMNQIRRDGFQNKLELTTNYEETDNLIDTFNEMMYQIEESFN). The 217-residue stretch at 240–456 (DASHELRTPL…TFKISFPVLN (217 aa)) folds into the Histidine kinase domain. Position 243 is a phosphohistidine; by autocatalysis (H243).

Autophosphorylated.

It is found in the cell membrane. It catalyses the reaction ATP + protein L-histidine = ADP + protein N-phospho-L-histidine.. Its function is as follows. Member of the two-component regulatory system ArlS/ArlR. ArlS probably functions as a sensor protein kinase which is autophosphorylated at a histidine residue and transfers its phosphate group to ArlR. The polypeptide is Signal transduction histidine-protein kinase ArlS (arlS) (Staphylococcus epidermidis (strain ATCC 12228 / FDA PCI 1200)).